An 843-amino-acid polypeptide reads, in one-letter code: Axin-2 (843 aa).

The interval 1-75 (MSSAMLVTCL…EGRASPDSPL (75 aa)) is disordered. Residues 21 to 30 (APRPPVPGEE) carry the Tankyrase-binding motif motif. The segment covering 56–69 (RRNEDGLGEPEGRA) has biased composition (basic and acidic residues). The 120-residue stretch at 81 to 200 (SLHSLLGDQD…LTSDIYLEYV (120 aa)) folds into the RGS domain. The interval 327-413 (VGSKKQLQRE…REGSELTLNS (87 aa)) is interaction with GSK3B. Residues 334 to 393 (QREMHRSVKANGQVSLPHFPRTHRLPKEMTPVEPATFAAELISRLEKLKLELESRHSLEE) form an interaction with SIAH1 and SIAH2 region. Disordered stretches follow at residues 396–435 (QQIR…EEDP), 447–494 (LKTP…AASP), 561–674 (APET…RTTP), and 718–748 (ASQQ…EDHK). Positions 413–476 (SREGAPTQHP…PDHHHHHHSQ (64 aa)) are interaction with beta-catenin. Low complexity-rich tracts occupy residues 477-494 (YHSL…AASP) and 588-597 (PGLALPAREG). Residues 727–741 (SATVQTGATPFSNPS) are compositionally biased toward polar residues. A DIX domain is found at 761-843 (ASELVVTYFF…RILGKVERID (83 aa)).

As to quaternary structure, interacts with glycogen synthase kinase-3 beta (GSK3B) and beta-catenin. The interaction between axin and beta-catenin occurs via the armadillo repeats contained in beta-catenin. Interacts with SMAD7 and RNF111. Interacts with ANKRD6. Interacts with SIAH1. Interacts with SIAH2. Post-translationally, probably phosphorylated by GSK3B and dephosphorylated by PP2A. In terms of processing, ADP-ribosylated by tankyrase TNKS and TNKS2. Poly-ADP-ribosylated protein is recognized by RNF146, followed by ubiquitination and subsequent activation of the Wnt signaling pathway. Ubiquitinated by RNF146 when poly-ADP-ribosylated, leading to its degradation and subsequent activation of the Wnt signaling pathway. Deubiquitinated by USP34, deubiquitinated downstream of beta-catenin stabilization step: deubiquitination is important Wnt signaling to positively regulate beta-catenin (CTNBB1)-mediated transcription. As to expression, expressed in brain and lymphoblast.

It is found in the cytoplasm. In terms of biological role, inhibitor of the Wnt signaling pathway. Down-regulates beta-catenin. Probably facilitate the phosphorylation of beta-catenin and APC by GSK3B. The sequence is that of Axin-2 (AXIN2) from Homo sapiens (Human).